A 178-amino-acid polypeptide reads, in one-letter code: Cell division protein ZapC (178 aa).

It belongs to the ZapC family. As to quaternary structure, interacts directly with FtsZ.

It localises to the cytoplasm. Its function is as follows. Contributes to the efficiency of the cell division process by stabilizing the polymeric form of the cell division protein FtsZ. Acts by promoting interactions between FtsZ protofilaments and suppressing the GTPase activity of FtsZ. In Aeromonas hydrophila subsp. hydrophila (strain ATCC 7966 / DSM 30187 / BCRC 13018 / CCUG 14551 / JCM 1027 / KCTC 2358 / NCIMB 9240 / NCTC 8049), this protein is Cell division protein ZapC.